The primary structure comprises 234 residues: N-(5'-phosphoribosyl)anthranilate isomerase (234 aa).

The tract at residues 211-234 (RAASSSPRPVDGESPAFQRSEKAG) is disordered.

This sequence belongs to the TrpF family.

The catalysed reaction is N-(5-phospho-beta-D-ribosyl)anthranilate = 1-(2-carboxyphenylamino)-1-deoxy-D-ribulose 5-phosphate. It functions in the pathway amino-acid biosynthesis; L-tryptophan biosynthesis; L-tryptophan from chorismate: step 3/5. The protein is N-(5'-phosphoribosyl)anthranilate isomerase of Afipia carboxidovorans (strain ATCC 49405 / DSM 1227 / KCTC 32145 / OM5) (Oligotropha carboxidovorans).